Consider the following 1307-residue polypeptide: Light-sensor Protein kinase (1307 aa).

Positions 215 to 394 (DIELLCDTIV…VFGMQLNLHV (180 aa)) constitute a GAF domain. C320 serves as a coordination point for phytochromobilin. The 72-residue stretch at 609–680 (LANEMSRVLE…RLLSLALQGE (72 aa)) folds into the PAS domain. A PAC domain is found at 683–739 (QNVEIKLKTFGTQTTERAVILIVNACCSRDASDFVVGVFFVGQDVTEQRMFMDRFTR). The tract at residues 779 to 1003 (DHATGSVERL…WSFSEKFFQW (225 aa)) is hinge. The 304-residue stretch at 1004–1307 (IQITGSLGSG…DSYPSTEEPS (304 aa)) folds into the Protein kinase domain. Residues 1010 to 1018 (LGSGSSATV) and K1031 each bind ATP. The active site involves D1127.

This sequence in the N-terminal section; belongs to the phytochrome family. In the C-terminal section; belongs to the protein kinase superfamily. Ser/Thr protein kinase family. As to quaternary structure, homodimer. Contains one covalently linked phytochromobilin chromophore.

It localises to the cell membrane. It catalyses the reaction L-seryl-[protein] + ATP = O-phospho-L-seryl-[protein] + ADP + H(+). The enzyme catalyses L-threonyl-[protein] + ATP = O-phospho-L-threonyl-[protein] + ADP + H(+). Functionally, regulatory photoreceptor which exists in two forms that are reversibly interconvertible by light: the Pr form that absorbs maximally in the red region of the spectrum and the Pfr form that absorbs maximally in the far-red region. Photoconversion of Pr to Pfr induces an array of morphogenic responses, whereas reconversion of Pfr to Pr cancels the induction of those responses. Pfr controls the expression of a number of nuclear genes including those encoding the small subunit of ribulose-bisphosphate carboxylase, chlorophyll A/B binding protein, protochlorophyllide reductase, rRNA, etc. It also controls the expression of its own gene(s) in a negative feedback fashion. This is Light-sensor Protein kinase (PHY1) from Ceratodon purpureus (Fire moss).